The chain runs to 2046 residues: Protein TIC 214 (2046 aa).

6 helical membrane-spanning segments follow: residues 18 to 38 (VSGP…LPFG), 54 to 74 (LYGI…FLSM), 79 to 99 (IYAA…YTFC), 125 to 145 (ILSL…LLAN), 163 to 183 (ISFM…FINL), and 214 to 234 (TFSV…PLIF). Disordered stretches follow at residues 278-299 (DEDR…EDRS), 320-472 (ARSV…VPRE), and 1833-1898 (AKDS…EDEI). 3 stretches are compositionally biased toward basic and acidic residues: residues 322-335 (SVAE…EHRS), 344-368 (SVAE…RSVA), and 378-457 (AKKD…RSVA). Positions 1833 to 1866 (AKDSNANDINAKDSNANDINANDSNAKDSNANDI) are enriched in low complexity. Over residues 1882 to 1898 (NAKDSNADVPKKKEDEI) the composition is skewed to basic and acidic residues.

This sequence belongs to the TIC214 family. Part of the Tic complex.

The protein localises to the plastid. It is found in the chloroplast inner membrane. Involved in protein precursor import into chloroplasts. May be part of an intermediate translocation complex acting as a protein-conducting channel at the inner envelope. The chain is Protein TIC 214 from Pinus koraiensis (Korean pine).